The sequence spans 154 residues: Ribosomal RNA large subunit methyltransferase H (154 aa).

Residues Gly-103 and 122-127 (FSKLTF) contribute to the S-adenosyl-L-methionine site.

The protein belongs to the RNA methyltransferase RlmH family. In terms of assembly, homodimer.

The protein resides in the cytoplasm. The enzyme catalyses pseudouridine(1915) in 23S rRNA + S-adenosyl-L-methionine = N(3)-methylpseudouridine(1915) in 23S rRNA + S-adenosyl-L-homocysteine + H(+). In terms of biological role, specifically methylates the pseudouridine at position 1915 (m3Psi1915) in 23S rRNA. This chain is Ribosomal RNA large subunit methyltransferase H, found in Caldicellulosiruptor bescii (strain ATCC BAA-1888 / DSM 6725 / KCTC 15123 / Z-1320) (Anaerocellum thermophilum).